We begin with the raw amino-acid sequence, 378 residues long: Tafazzin (378 aa).

Over 1 to 137 the chain is Mitochondrial intermembrane; the sequence is MFMVVCSNLR…RLRNPSKFWY (137 aa). The tract at residues 46 to 112 is disordered; that stretch reads APEARPVPDE…DQDADPSLDV (67 aa). Basic and acidic residues predominate over residues 51–67; that stretch reads PVPDERYPGSQQDRKDI. The stretch at 138–158 is an intramembrane region; it reads VVSQFVVSAVGIFSKVVLMFL. The Mitochondrial intermembrane portion of the chain corresponds to 159–378; sequence NKPRVYNRER…ETEKLHRERN (220 aa). The short motif at 188 to 193 is the HXXXXD motif element; the sequence is HYSCFD.

This sequence belongs to the taffazin family. In terms of assembly, associates with multiple protein complexes. Association with large protein complexes occurs only in the presence of cardiolipin.

The protein resides in the mitochondrion outer membrane. Its subcellular location is the mitochondrion inner membrane. It is found in the mitochondrion. The protein localises to the mitochondrion membrane. It localises to the golgi apparatus membrane. The protein resides in the endoplasmic reticulum membrane. It catalyses the reaction 1'-[1,2-diacyl-sn-glycero-3-phospho],3'-[1-acyl-sn-glycero-3-phospho]-glycerol + a 1,2-diacyl-sn-glycero-3-phosphocholine = a cardiolipin + a 1-acyl-sn-glycero-3-phosphocholine. It carries out the reaction 1'-[1,2-di-(9Z,12Z-octadecadienoyl)-sn-glycero-3-phospho]-3'-[1-(9Z,12Z-octadecadienoyl)-sn-glycero-3-phospho]-glycerol + 1-hexadecanoyl-2-(9Z,12Z-octadecadienoyl)-sn-glycero-3-phosphocholine = 1',3'-bis-[1,2-di-(9Z,12Z-octadecadienoyl)-sn-glycero-3-phospho]-glycerol + 1-hexadecanoyl-sn-glycero-3-phosphocholine. The enzyme catalyses 1'-[1,2-di-(9Z,12Z-octadecadienoyl)-sn-glycero-3-phospho]-3'-[2-(9Z,12Z-octadecadienoyl)-sn-glycero-3-phospho]-glycerol + 1-hexadecanoyl-2-(9Z,12Z-octadecadienoyl)-sn-glycero-3-phosphocholine = 1',3'-bis-[1,2-di-(9Z,12Z-octadecadienoyl)-sn-glycero-3-phospho]-glycerol + 1-hexadecanoyl-sn-glycero-3-phosphocholine. The catalysed reaction is 1,2-di-(9Z,12Z-octadecadienoyl)-sn-glycero-3-phosphocholine + 1'-[1,2-di-(9Z,12Z-octadecadienoyl)-sn-glycero-3-phospho]-3'-[1-(9Z,12Z-octadecadienoyl)-sn-glycero-3-phospho]-glycerol = 1-(9Z,12Z)-octadecadienoyl-sn-glycero-3-phosphocholine + 1',3'-bis-[1,2-di-(9Z,12Z-octadecadienoyl)-sn-glycero-3-phospho]-glycerol. It catalyses the reaction 1-tetradecanoyl-sn-glycero-3-phosphocholine + 1',3'-bis-[1,2-di-(9Z,12Z-octadecadienoyl)-sn-glycero-3-phospho]-glycerol = 1-tetradecanoyl-2-(9Z,12Z-octadecadienoyl)-sn-glycero-3-phosphocholine + 1'-[1,2-di-(9Z,12Z-octadecadienoyl)-sn-glycero-3-phospho]-3'-[1-(9Z,12Z-octadecadienoyl)-sn-glycero-3-phospho]-glycerol. It carries out the reaction 1',3'-bis[1,2-di-(9Z-octadecenoyl)-sn-glycero-3-phospho]-glycerol + 1-nonadecanoyl-sn-glycero-3-phosphocholine = 1-nonadecanoyl-2-(9Z-octadecenoyl)-sn-glycero-3-phosphocholine + 1'-[1,2-di-(9Z-octadecenoyl)-sn-glycero-3-phospho]-3'-[1-(9Z-octadecenoyl)-sn-glycero-3-phospho]-glycerol. The enzyme catalyses a 1,2-diacyl-sn-glycero-3-phospho-(1'-sn-glycerol) + a 1-acyl-sn-glycero-3-phosphocholine = 1-acyl-sn-glycero-3-phospho-(1'-sn-glycerol) + a 1,2-diacyl-sn-glycero-3-phosphocholine. The catalysed reaction is 1-hexadecanoyl-2-(9Z,12Z-octadecadienoyl)-sn-glycero-3-phospho-(1'-sn-glycerol) + 1-hexadecanoyl-sn-glycero-3-phosphocholine = 1-hexadecanoyl-sn-glycero-3-phospho-(1'-sn-glycerol) + 1-hexadecanoyl-2-(9Z,12Z-octadecadienoyl)-sn-glycero-3-phosphocholine. It catalyses the reaction 1,2-di-(9Z-octadecenoyl)-sn-glycero-3-phospho-(1'-sn-glycerol) + 1-nonadecanoyl-sn-glycero-3-phosphocholine = 1-nonadecanoyl-2-(9Z-octadecenoyl)-sn-glycero-3-phosphocholine + 1-(9Z-octadecenoyl)-sn-glycero-3-phospho-(1'-sn-glycerol). It carries out the reaction a 1,2-diacyl-sn-glycero-3-phosphate + a 1-acyl-sn-glycero-3-phosphocholine = a 1-acyl-sn-glycero-3-phosphate + a 1,2-diacyl-sn-glycero-3-phosphocholine. The enzyme catalyses 1-hexadecanoyl-2-(9Z,12Z-octadecadienoyl)-sn-glycero-3-phosphate + 1-hexadecanoyl-sn-glycero-3-phosphocholine = 1-hexadecanoyl-2-(9Z,12Z-octadecadienoyl)-sn-glycero-3-phosphocholine + 1-hexadecanoyl-sn-glycero-3-phosphate. The catalysed reaction is 1-hexadecanoyl-2-(9Z,12Z-octadecadienoyl)-sn-glycero-3-phosphocholine + 1-(9Z-octadecenoyl)-sn-glycero-3-phosphate = 1-(9Z)-octadecenoyl-2-(9Z,12Z)-octadecadienoyl-sn-glycero-3-phosphate + 1-hexadecanoyl-sn-glycero-3-phosphocholine. It catalyses the reaction a 1-acyl-sn-glycero-3-phosphocholine + a 1,2-diacyl-sn-glycero-3-phosphoethanolamine = a 1-acyl-sn-glycero-3-phosphoethanolamine + a 1,2-diacyl-sn-glycero-3-phosphocholine. It carries out the reaction 1-hexadecanoyl-2-(9Z,12Z-octadecadienoyl)-sn-glycero-3-phosphoethanolamine + 1-hexadecanoyl-sn-glycero-3-phosphocholine = 1-hexadecanoyl-2-(9Z,12Z-octadecadienoyl)-sn-glycero-3-phosphocholine + 1-hexadecanoyl-sn-glycero-3-phosphoethanolamine. The enzyme catalyses 1,2-di-(9Z,12Z-octadecadienoyl)-sn-glycero-3-phosphoethanolamine + 1-tetradecanoyl-sn-glycero-3-phosphocholine = 1-(9Z,12Z-octadecadienoyl)-sn-glycero-3-phosphoethanolamine + 1-tetradecanoyl-2-(9Z,12Z-octadecadienoyl)-sn-glycero-3-phosphocholine. The catalysed reaction is 1'-[1,2-diacyl-sn-glycero-3-phospho],3'-[1-acyl-sn-glycero-3-phospho]-glycerol + a 1,2-diacyl-sn-glycero-3-phosphoethanolamine = a cardiolipin + a 1-acyl-sn-glycero-3-phosphoethanolamine. It catalyses the reaction 1-hexadecanoyl-2-(9Z,12Z-octadecadienoyl)-sn-glycero-3-phosphoethanolamine + 1'-[1,2-di-(9Z,12Z-octadecadienoyl)-sn-glycero-3-phospho]-3'-[1-(9Z,12Z-octadecadienoyl)-sn-glycero-3-phospho]-glycerol = 1',3'-bis-[1,2-di-(9Z,12Z-octadecadienoyl)-sn-glycero-3-phospho]-glycerol + 1-hexadecanoyl-sn-glycero-3-phosphoethanolamine. It carries out the reaction 1'-[1-(9Z,12Z-octadecadienoyl)-2-(9Z-octadecenoyl)-sn-glycero-3-phospho]-3'-[1-(9Z,12Z-octadecadienoyl)-sn-glycero-3-phospho]-glycerol + 1',3'-bis-[1,2-di-(9Z,12Z-octadecadienoyl)-sn-glycero-3-phospho]-glycerol = 1'-[1,2-di-(9Z,12Z-octadecadienoyl)-sn-glycero-3-phospho]-3'-[1-(9Z,12Z-octadecadienoyl)-2-(9Z-octadecenoyl)-sn-glycero-3-phospho]-glycerol + 1'-[1,2-di-(9Z,12Z-octadecadienoyl)-sn-glycero-3-phospho]-3'-[1-(9Z,12Z-octadecadienoyl)-sn-glycero-3-phospho]-glycerol. The enzyme catalyses 1,2-di-(9Z-hexadecenoyl)-sn-glycero-3-phosphocholine + 1-hexadecanoyl-sn-glycero-3-phosphocholine = 1-hexadecanoyl-2-(9Z-hexadecenoyl)-sn-glycero-3-phosphocholine + 1-(9Z-hexadecenoyl)-sn-glycero-3-phosphocholine. The catalysed reaction is 1,2-dioctadecanoyl-sn-glycero-3-phosphocholine + 1-hexadecanoyl-sn-glycero-3-phosphocholine = 1-hexadecanoyl-2-octadecanoyl-sn-glycero-3-phosphocholine + 1-octadecanoyl-sn-glycero-3-phosphocholine. It catalyses the reaction 1,2-di-(9Z-octadecenoyl)-sn-glycero-3-phosphocholine + 1-hexadecanoyl-sn-glycero-3-phosphocholine = 1-hexadecanoyl-2-(9Z-octadecenoyl)-sn-glycero-3-phosphocholine + 1-(9Z-octadecenoyl)-sn-glycero-3-phosphocholine. It carries out the reaction 1,2-di-(9Z,12Z-octadecadienoyl)-sn-glycero-3-phosphocholine + 1-(9Z-octadecenoyl)-sn-glycero-3-phosphocholine = 1-(9Z)-octadecenoyl-2-(9Z,12Z)-octadecadienoyl-sn-glycero-3-phosphocholine + 1-(9Z,12Z)-octadecadienoyl-sn-glycero-3-phosphocholine. The enzyme catalyses 1,2-di-(9Z,12Z,15Z-octadecatrienoyl)-sn-glycero-3-phosphocholine + 1-tetradecanoyl-sn-glycero-3-phosphocholine = 1-tetradecanoyl-2-(9Z,12Z,15Z-octadecatrienoyl)-sn-glycero-3-phosphocholine + 1-(9Z,12Z,15Z-octadecatrienoyl)-sn-glycero-3-phosphocholine. The catalysed reaction is 1-nonadecanoyl-sn-glycero-3-phosphocholine + 1-octadecanoyl-2-(9Z-octadecenoyl)-sn-glycero-3-phosphocholine = 1-nonadecanoyl-2-(9Z-octadecenoyl)-sn-glycero-3-phosphocholine + 1-octadecanoyl-sn-glycero-3-phosphocholine. It catalyses the reaction 1-(9Z)-octadecenoyl-2-octadecanoyl-sn-glycero-3-phosphocholine + 1-nonadecanoyl-sn-glycero-3-phosphocholine = 2-octadecanoyl-sn-glycero-3-phosphocholine + 1-nonadecanoyl-2-(9Z-octadecenoyl)-sn-glycero-3-phosphocholine. The protein operates within phospholipid metabolism. Acyltransferase required to remodel newly synthesized phospholipid cardiolipin (1',3'-bis-[1,2-diacyl-sn-glycero-3-phospho]-glycerol or CL), a key component of the mitochondrial inner membrane, with tissue specific acyl chains necessary for adequate mitochondrial function. Its role in cellular physiology is to improve mitochondrial performance. CL is critical for the coassembly of lipids and proteins in mitochondrial membranes. For instance, remodeling of the acyl groups of CL in the mitochondrial inner membrane affects the assembly and stability of respiratory chain complex IV and its supercomplex forms. Catalyzes the transacylation between phospholipids and lysophospholipids, with the highest rate being between phosphatidylcholine (1,2-diacyl-sn-glycero-3-phosphocholine or PC) and CL. Catalyzes both 1-acyl-sn-glycero-3-phosphocholine (lysophosphatidylcholine or LPC) reacylation and PC-CL transacylation, that means, it exchanges acyl groups between CL and PC by a combination of forward and reverse transacylations. Also catalyzes transacylations between other phospholipids such as phosphatidylethanolamine (1,2-diacyl-sn-glycero-3-phosphoethanolamine or PE) and CL, between PC and PE, and between PC and phosphatidate (1,2-diacyl-sn-glycero-3-phosphate or PA), although at lower rate. Not regiospecific, it transfers acyl groups into any of the sn-1 and sn-2 positions of the monolysocardiolipin (MLCL), which is an important prerequisite for uniformity and symmetry in CL acyl distribution. Cannot transacylate dilysocardiolipin (DLCL), thus, the role of MLCL is limited to that of an acyl acceptor. CoA-independent, it can reshuffle molecular species within a single phospholipid class. Redistributes fatty acids between MLCL, CL, and other lipids, which prolongs the half-life of CL. Its action is completely reversible, which allows for cyclic changes, such as fission and fusion or bending and flattening of the membrane. Hence, by contributing to the flexibility of the lipid composition, it plays an important role in the dynamics of mitochondria membranes. Essential for the final stage of spermatogenesis, spermatid individualization. Required for the initiation of mitophagy. This is Tafazzin from Drosophila melanogaster (Fruit fly).